Here is a 1028-residue protein sequence, read N- to C-terminus: U2 snRNP-associated SURP motif-containing protein (1028 aa).

Disordered regions lie at residues 1 to 111 and 141 to 272; these read MADK…EDEK and VNAA…DPST. N-acetylalanine is present on alanine 2. Residues 7–16 are compositionally biased toward polar residues; sequence GGSQKASSKT. A compositionally biased stretch (basic residues) spans 45-54; it reads TRPKSPRKHN. Basic and acidic residues predominate over residues 55–64; it reads YRNESARESL. Serine 67 carries the phosphoserine modification. A Glycyl lysine isopeptide (Lys-Gly) (interchain with G-Cter in SUMO2) cross-link involves residue lysine 80. Residues 92–121 adopt a coiled-coil conformation; sequence AKRTLSKKEQEELKKKEDEKAAAEIYEEFL. Basic and acidic residues-rich tracts occupy residues 97–111 and 144–155; these read SKKE…EDEK and AKEEHETDEKRG. Residues lysine 145 and lysine 168 each participate in a glycyl lysine isopeptide (Lys-Gly) (interchain with G-Cter in SUMO2) cross-link. Residues 169 to 178 are compositionally biased toward polar residues; the sequence is NPPNQSSNER. Over residues 186–222 the composition is skewed to basic and acidic residues; that stretch reads ETKKPPLKKGEKEKKKSNLELFKEELKQIQEERDERH. Positions 192–232 form a coiled coil; the sequence is LKKGEKEKKKSNLELFKEELKQIQEERDERHKTKGRLSRFE. A Phosphoserine modification is found at serine 202. Residue lysine 208 forms a Glycyl lysine isopeptide (Lys-Gly) (interchain with G-Cter in SUMO2) linkage. Serine 236 carries the phosphoserine modification. The span at 239–249 shows a compositional bias: basic and acidic residues; the sequence is DGQRRSMDAPS. The 82-residue stretch at 273 to 354 folds into the RRM domain; the sequence is TNLYLGNINP…FEMKLGWGKA (82 aa). An SURP motif repeat occupies 429–472; it reads LIHRMIEFVVREGPMFEAMIMNREINNPMFRFLFENQTPAHVYY. Serine 484 carries the post-translational modification Phosphoserine. Residues 533–678 form the CID domain; sequence LKEEQRDKLE…KLQNIFLGLV (146 aa). Threonine 718 bears the Phosphothreonine mark. Glycyl lysine isopeptide (Lys-Gly) (interchain with G-Cter in SUMO2) cross-links involve residues lysine 747 and lysine 748. N6-acetyllysine; alternate is present on lysine 759. Lysine 759 is covalently cross-linked (Glycyl lysine isopeptide (Lys-Gly) (interchain with G-Cter in SUMO2); alternate). Disordered stretches follow at residues 777–840 and 854–1028; these read KWEL…EEKR and QDEL…KNKH. Positions 779–809 form a coiled coil; it reads ELFDQHEESEEEENQNQEEESEDEEDTQSSK. Residues 785–805 show a composition bias toward acidic residues; sequence EESEEEENQNQEEESEDEEDT. 3 positions are modified to phosphoserine: serine 787, serine 799, and serine 810. Composition is skewed to basic and acidic residues over residues 809–840 and 873–921; these read KSEE…EEKR and QVEH…TPTR. Residues lysine 821, lysine 828, and lysine 831 each participate in a glycyl lysine isopeptide (Lys-Gly) (interchain with G-Cter in SUMO2) cross-link. A coiled-coil region spans residues 836–914; that stretch reads SEEKRAKLRE…ESRSKDEKEK (79 aa). Threonine 930 carries the phosphothreonine modification. 2 positions are modified to phosphoserine: serine 945 and serine 947. Over residues 949–979 the composition is skewed to basic and acidic residues; it reads KSERSERSERSHKESSRSRSSHKDSPRDVSK. Basic residues predominate over residues 990–1028; sequence TPKRSRRSRSRSPKKSGKKSRSQSRSPHRSHKKSKKNKH.

The protein belongs to the splicing factor SR family. As to quaternary structure, interacts with ERBB4.

It localises to the nucleus. The sequence is that of U2 snRNP-associated SURP motif-containing protein (U2SURP) from Pongo abelii (Sumatran orangutan).